A 291-amino-acid chain; its full sequence is MPKIRKAVIPAAGLGTRLLPATKAIPKEMLPLVNKPTIQYIVEEAVASGIKEILVIVSSKKEAIIDHFDYDFILENALLQKHKDQEHQEIKDIANLAHIYFVRQKHQHGLGDAILHAKSFVGNEDFAVLLGDDVVFGEQPALAQCIQAYEQTDCQVIGVQEVPHDQVNKYGIVTPEANWQKQALVKILGMVEKPAVNEAKSNLAILSRYILKPSIFTALKQVPFGVGGELQLTDGLNYCLQQGEPFFAKHFGGTRFDVGTKNGFIKANLYTALKTDAITKDEVLAILKEFA.

The protein belongs to the UDPGP type 2 family.

It carries out the reaction alpha-D-glucose 1-phosphate + UTP + H(+) = UDP-alpha-D-glucose + diphosphate. Functionally, may play a role in stationary phase survival. This is UTP--glucose-1-phosphate uridylyltransferase (galU) from Mycoplasma pneumoniae (strain ATCC 29342 / M129 / Subtype 1) (Mycoplasmoides pneumoniae).